We begin with the raw amino-acid sequence, 720 residues long: Exocyst complex component 7 (720 aa).

Coiled-coil stretches lie at residues Glu5–Lys34 and Val63–Asn83. Ser133 is modified (phosphoserine). The disordered stretch occupies residues Ser249 to Pro268.

The protein belongs to the EXO70 family.

It localises to the cytoplasm. It is found in the cytosol. Its subcellular location is the cell membrane. The protein localises to the midbody. The protein resides in the midbody ring. Component of the exocyst complex involved in the docking of exocytic vesicles with fusion sites on the plasma membrane. It is required for neuron survival and plays an essential role in telencephalon development. The polypeptide is Exocyst complex component 7 (exoc7) (Danio rerio (Zebrafish)).